The following is a 558-amino-acid chain: Arginine--tRNA ligase (558 aa).

Positions 116-126 (ANPNGPLHVGH) match the 'HIGH' region motif.

The protein belongs to the class-I aminoacyl-tRNA synthetase family.

It localises to the cytoplasm. The catalysed reaction is tRNA(Arg) + L-arginine + ATP = L-arginyl-tRNA(Arg) + AMP + diphosphate. This is Arginine--tRNA ligase from Methanocorpusculum labreanum (strain ATCC 43576 / DSM 4855 / Z).